We begin with the raw amino-acid sequence, 376 residues long: Oligopeptide transport system permease protein OppC (376 aa).

Helical transmembrane passes span 46–66 (WAILFFLLIVVIVLLAIIVPL), 149–169 (FPLLGTNGLGIDIWTLLWASV), 173–193 (LWIAVVVAIIAMVFGTIYGAV), 209–229 (IIEIIDIVPSILWIIVLGATF), 242–262 (VIFTLIFVFWTWPATTTRIYI), 297–317 (LAVVFVSLIPAVIGYEASLVF), and 341–361 (VALILSSIVSFAVLTVAARTF). In terms of domain architecture, ABC transmembrane type-1 spans 169–366 (VAKSLWIAVV…AARTFANALN (198 aa)).

It belongs to the binding-protein-dependent transport system permease family. OppBC subfamily. The complex is composed of two ATP-binding proteins (OppD and OppF), two transmembrane proteins (OppB and OppC) and a solute-binding protein (OppA).

Its subcellular location is the cell membrane. Part of the ABC transporter complex OppABCDF involved in the uptake of oligopeptides. Probably responsible for the translocation of the substrate across the membrane. The polypeptide is Oligopeptide transport system permease protein OppC (oppC) (Mycoplasma genitalium (strain ATCC 33530 / DSM 19775 / NCTC 10195 / G37) (Mycoplasmoides genitalium)).